The chain runs to 326 residues: Cytosolic Fe-S cluster assembly factor NBP35 (326 aa).

Residues Met1–Ser38 form a disordered region. The span at Thr16–Pro26 shows a compositional bias: basic and acidic residues. Residues Cys25, Cys39, Cys42, and Cys48 each contribute to the [4Fe-4S] cluster site. Gly78 to Ser85 serves as a coordination point for ATP. [4Fe-4S] cluster contacts are provided by Cys251 and Cys254.

The protein belongs to the Mrp/NBP35 ATP-binding proteins family. NUBP1/NBP35 subfamily. In terms of assembly, heterotetramer of 2 NBP35 and 2 CFD1 chains. [4Fe-4S] cluster serves as cofactor.

It is found in the cytoplasm. The protein resides in the nucleus. In terms of biological role, component of the cytosolic iron-sulfur (Fe/S) protein assembly (CIA) machinery. Required for maturation of extramitochondrial Fe-S proteins. The NBP35-CFD1 heterotetramer forms a Fe-S scaffold complex, mediating the de novo assembly of an Fe-S cluster and its transfer to target apoproteins. Required for biogenesis and export of both ribosomal subunits, which may reflect a role in assembly of the Fe/S clusters in RLI1, a protein which performs rRNA processing and ribosome export. In Kluyveromyces lactis (strain ATCC 8585 / CBS 2359 / DSM 70799 / NBRC 1267 / NRRL Y-1140 / WM37) (Yeast), this protein is Cytosolic Fe-S cluster assembly factor NBP35.